Reading from the N-terminus, the 902-residue chain is Cytosolic 10-formyltetrahydrofolate dehydrogenase (902 aa).

The hydrolase domain stretch occupies residues 1–310; it reads MKIAVIGQSL…PASQYYKTAD (310 aa). A (6R)-10-formyltetrahydrofolate-binding site is contributed by 88 to 90; it reads QFI. The active-site Proton donor is the His106. Asp142 contacts (6R)-10-formyltetrahydrofolate. Residues 318 to 395 enclose the Carrier domain; the sequence is DEEKKFSEEI…EFIQMVVRRL (78 aa). At Ser354 the chain carries O-(pantetheine 4'-phosphoryl)serine. An aldehyde dehydrogenase domain region spans residues 417 to 902; that stretch reads TVKIPHQLFI…LKTKAVTIEY (486 aa). NADP(+) contacts are provided by residues 571 to 573, 597 to 600, 630 to 635, 650 to 651, and 673 to 674; these read IPW, KPAQ, GSLIGQ, GS, and EL. Glu673 acts as the Proton acceptor in catalysis. Catalysis depends on Cys707, which acts as the Proton donor. NADP(+) contacts are provided by residues Lys757 and 804 to 806; that span reads ESF.

The protein in the N-terminal section; belongs to the GART family. In the C-terminal section; belongs to the aldehyde dehydrogenase family. ALDH1L subfamily. In terms of assembly, homotetramer. Phosphopantetheinylation at Ser-354 by AASDHPPT is required for the formyltetrahydrofolate dehydrogenase activity.

It is found in the cytoplasm. The protein localises to the cytosol. The enzyme catalyses (6R)-10-formyltetrahydrofolate + NADP(+) + H2O = (6S)-5,6,7,8-tetrahydrofolate + CO2 + NADPH + H(+). Cytosolic 10-formyltetrahydrofolate dehydrogenase that catalyzes the NADP(+)-dependent conversion of 10-formyltetrahydrofolate to tetrahydrofolate and carbon dioxide. May also have an NADP(+)-dependent aldehyde dehydrogenase activity towards formaldehyde, acetaldehyde, propionaldehyde, and benzaldehyde. Regulates reduced folate pools as well as glycine metabolism. The protein is Cytosolic 10-formyltetrahydrofolate dehydrogenase (aldh1l1) of Xenopus tropicalis (Western clawed frog).